Consider the following 243-residue polypeptide: Small ribosomal subunit protein uS3 (243 aa).

The KH type-2 domain occupies 38–106 (IRKYLNARLA…DIQINIFEVK (69 aa)). The tract at residues 217-243 (TQTKESGRGGNGNNNGGKNFKRKKNNR) is disordered.

It belongs to the universal ribosomal protein uS3 family. Part of the 30S ribosomal subunit. Forms a tight complex with proteins S10 and S14.

Functionally, binds the lower part of the 30S subunit head. Binds mRNA in the 70S ribosome, positioning it for translation. The chain is Small ribosomal subunit protein uS3 from Phocaeicola vulgatus (strain ATCC 8482 / DSM 1447 / JCM 5826 / CCUG 4940 / NBRC 14291 / NCTC 11154) (Bacteroides vulgatus).